A 179-amino-acid polypeptide reads, in one-letter code: Large ribosomal subunit protein uL6 (179 aa).

Belongs to the universal ribosomal protein uL6 family. Part of the 50S ribosomal subunit.

In terms of biological role, this protein binds to the 23S rRNA, and is important in its secondary structure. It is located near the subunit interface in the base of the L7/L12 stalk, and near the tRNA binding site of the peptidyltransferase center. The chain is Large ribosomal subunit protein uL6 from Alkaliphilus metalliredigens (strain QYMF).